A 23-amino-acid polypeptide reads, in one-letter code: Septenin 2d (23 aa).

As to expression, expressed in skin glands.

It localises to the secreted. Functionally, may act as an antimicrobial peptide. The chain is Septenin 2d from Osteopilus septentrionalis (Cuban treefrog).